Here is a 294-residue protein sequence, read N- to C-terminus: S-adenosylmethionine uptake transporter (294 aa).

A run of 10 helical transmembrane segments spans residues 4–24 (ALKT…SSSA), 39–59 (FEVA…FVFY), 74–91 (ILRG…TYGL), 98–118 (TATV…VFFL), 121–141 (NIIW…VVTL), 148–168 (FNPE…LDII), 177–197 (SMIS…LPVA), 207–227 (FELA…FFLL), 237–257 (ATAP…YFIF), and 260–280 (FPDK…LFII). EamA domains lie at 21-141 (SSSA…VVTL) and 160-280 (ISFA…LFII).

The protein belongs to the drug/metabolite transporter (DMT) superfamily. 10 TMS drug/metabolite exporter (DME) (TC 2.A.7.3) family.

It is found in the cell inner membrane. Its function is as follows. Transports S-adenosylmethionine. This chain is S-adenosylmethionine uptake transporter (sam), found in Rickettsia felis (strain ATCC VR-1525 / URRWXCal2) (Rickettsia azadi).